Consider the following 358-residue polypeptide: 3-dehydroquinate synthase (358 aa).

Residues 70-75 (DGEQFK), 104-108 (GVIGD), 128-129 (TT), lysine 141, lysine 150, and 168-171 (CLHT) each bind NAD(+). Residues glutamate 183, histidine 246, and histidine 263 each coordinate Zn(2+).

This sequence belongs to the sugar phosphate cyclases superfamily. Dehydroquinate synthase family. Requires Co(2+) as cofactor. Zn(2+) is required as a cofactor. The cofactor is NAD(+).

Its subcellular location is the cytoplasm. It carries out the reaction 7-phospho-2-dehydro-3-deoxy-D-arabino-heptonate = 3-dehydroquinate + phosphate. It participates in metabolic intermediate biosynthesis; chorismate biosynthesis; chorismate from D-erythrose 4-phosphate and phosphoenolpyruvate: step 2/7. Catalyzes the conversion of 3-deoxy-D-arabino-heptulosonate 7-phosphate (DAHP) to dehydroquinate (DHQ). The polypeptide is 3-dehydroquinate synthase (Shewanella baltica (strain OS195)).